Here is a 431-residue protein sequence, read N- to C-terminus: UDP-N-acetylmuramate--L-alanine ligase (431 aa).

ATP is bound at residue Gly-108–Ser-114.

Belongs to the MurCDEF family.

Its subcellular location is the cytoplasm. It carries out the reaction UDP-N-acetyl-alpha-D-muramate + L-alanine + ATP = UDP-N-acetyl-alpha-D-muramoyl-L-alanine + ADP + phosphate + H(+). The protein operates within cell wall biogenesis; peptidoglycan biosynthesis. Its function is as follows. Cell wall formation. The sequence is that of UDP-N-acetylmuramate--L-alanine ligase from Macrococcus caseolyticus (strain JCSC5402) (Macrococcoides caseolyticum).